A 184-amino-acid polypeptide reads, in one-letter code: MPTFDTTKQIFLCGLPSVGKTSFGRLLAQFLSLPFFDTDHLLSARFHGDSPKAIYQRFGEEGFCQEELLTLINLPVIPSVVALGGKTLLDKQIYEHITQRENILLVLLDLPFATLYQRLQKKPLPESLKNTPSLENALFQRLEKLRLLTPHIFSLQAATSLHEIGEVCQSFCLQFLTAQEIPYA.

17–22 is an ATP binding site; sequence SVGKTS. Thr-21 serves as a coordination point for Mg(2+). Asp-39 and Gly-85 together coordinate substrate.

The protein belongs to the shikimate kinase family. As to quaternary structure, monomer. Mg(2+) serves as cofactor.

It localises to the cytoplasm. The catalysed reaction is shikimate + ATP = 3-phosphoshikimate + ADP + H(+). It participates in metabolic intermediate biosynthesis; chorismate biosynthesis; chorismate from D-erythrose 4-phosphate and phosphoenolpyruvate: step 5/7. Catalyzes the specific phosphorylation of the 3-hydroxyl group of shikimic acid using ATP as a cosubstrate. This Chlamydia muridarum (strain MoPn / Nigg) protein is Shikimate kinase.